Consider the following 501-residue polypeptide: Putative BTB/POZ domain-containing protein L107 (501 aa).

The BTB domain maps to 16–87; the sequence is TDLELTLVDS…FYITDIERSQ (72 aa).

Belongs to the mimivirus BTB/WD family.

The sequence is that of Putative BTB/POZ domain-containing protein L107 from Acanthamoeba polyphaga mimivirus (APMV).